The sequence spans 720 residues: Engulfment and cell motility protein 3 (720 aa).

The ELMO domain occupies 307 to 479 (EQRDQLQALR…VVREQLARTL (173 aa)). The PH domain maps to 542-664 (RLCEGMLFRK…TDGLSALLGS (123 aa)). Positions 696 to 706 (PEQPPPVPPPP) match the SH3-binding motif.

Probably interacts directly with the SH3-domain of DOCK1 via its SH3-binding site. Part of a complex with DOCK1 and RAC1. Interacts with ADGRB3.

Its subcellular location is the cytoplasm. In terms of biological role, involved in cytoskeletal rearrangements required for phagocytosis of apoptotic cells and cell motility. Acts in association with DOCK1 and CRK. Was initially proposed to be required in complex with DOCK1 to activate Rac Rho small GTPases. May enhance the guanine nucleotide exchange factor (GEF) activity of DOCK1. The polypeptide is Engulfment and cell motility protein 3 (Elmo3) (Mus musculus (Mouse)).